Consider the following 119-residue polypeptide: Large ribosomal subunit protein uL18 (119 aa).

Belongs to the universal ribosomal protein uL18 family. As to quaternary structure, part of the 50S ribosomal subunit; part of the 5S rRNA/L5/L18/L25 subcomplex. Contacts the 5S and 23S rRNAs.

In terms of biological role, this is one of the proteins that bind and probably mediate the attachment of the 5S RNA into the large ribosomal subunit, where it forms part of the central protuberance. The polypeptide is Large ribosomal subunit protein uL18 (Helicobacter pylori (strain HPAG1)).